The chain runs to 288 residues: uncharacterized protein (288 aa).

The segment covering 1–12 (MTEGRCAQHPDG) has biased composition (basic and acidic residues). A disordered region spans residues 1–20 (MTEGRCAQHPDGLDVQDVCD).

The protein belongs to the class IV-like SAM-binding methyltransferase superfamily. RNA methyltransferase TrmH family.

This is an uncharacterized protein from Mycobacterium tuberculosis (strain ATCC 25618 / H37Rv).